Consider the following 292-residue polypeptide: Expansin-like protein 6 (292 aa).

Residues 1–24 (MIKIIYLIVLLVLLFKNNHIIIKA) form the signal peptide. Residues 25–267 (DDCPFPQIPI…QITSNSNNIL (243 aa)) are Extracellular-facing. Positions 47-150 (HASCGFEKLT…IKVPCPTYGN (104 aa)) constitute an Expansin-like EG45 domain. Cystine bridges form between Cys50/Cys80 and Cys83/Cys145. The N-linked (GlcNAc...) asparagine glycan is linked to Asn92. The chain crosses the membrane as a helical span at residues 268–288 (PPSLYIIFLISILFLIINNIF). Residues 289–292 (SNKY) are Cytoplasmic-facing.

It belongs to the expansin family. Expansin A subfamily.

It localises to the membrane. Functionally, may serve to lubricate the movement of the cellulose microfibrils during cell growth and wall extension and/or may serve to maintain the fluid state of the slug cell wall. The chain is Expansin-like protein 6 (expl6) from Dictyostelium discoideum (Social amoeba).